A 113-amino-acid polypeptide reads, in one-letter code: Death-associated protein-like 1.S (113 aa).

The segment at 1 to 53 (MTKELKVQSSPQALKAGHLPAVKAGGMRVSKKQGNDENSAPEKNAKKTLQEKP) is disordered.

The protein belongs to the DAP-DAPL1 family. In terms of assembly, associates with ribosomes; preventing translation. Interacts with eiF5a (eif5a and eif5a2); preventing translation.

In terms of biological role, ribosome-binding protein that promotes ribosome hibernation, a process during which ribosomes are stabilized in an inactive state and preserved from proteasomal degradation. Acts via its association with eiF5a (eif5a and eif5a2) at the polypeptide exit tunnel of the ribosome, preventing mRNA translation. Plays a key role in ribosome hibernation in the mature egg by preventing mRNA translation, leading to ribosome inactivation. Ribosomes, which are produced in large quantities during oogenesis, are stored and translationally repressed in the egg and early embryo. The protein is Death-associated protein-like 1.S (dapl1.S) of Xenopus laevis (African clawed frog).